A 347-amino-acid chain; its full sequence is NADH-ubiquinone oxidoreductase chain 2 (347 aa).

10 helical membrane-spanning segments follow: residues 3 to 23 (PPILLIILLTMISGTMIVLTS), 25 to 45 (HWLTIWIGLEMNMLAIIPILM), 60 to 80 (LLTQATASMILMMGITINLMF), 96 to 116 (AMVTTALAMKLGLAPFHFWVP), 149 to 169 (IDPNLLLPMAITSILIGGWGG), 178 to 198 (ILAYSSIAHMGWMTAVTLYNP), 200 to 220 (MMLLNLTIYIIMTTTTFMLFM), 237 to 257 (APLITPLILMLMLSLGGLPPL), 274 to 294 (EMIIIPTIMAITALLNLYFYM), and 323 to 343 (MILLSPLTVVSTMLLPITPLL).

Belongs to the complex I subunit 2 family. In terms of assembly, core subunit of respiratory chain NADH dehydrogenase (Complex I) which is composed of 45 different subunits. Interacts with TMEM242.

Its subcellular location is the mitochondrion inner membrane. The enzyme catalyses a ubiquinone + NADH + 5 H(+)(in) = a ubiquinol + NAD(+) + 4 H(+)(out). Functionally, core subunit of the mitochondrial membrane respiratory chain NADH dehydrogenase (Complex I) which catalyzes electron transfer from NADH through the respiratory chain, using ubiquinone as an electron acceptor. Essential for the catalytic activity and assembly of complex I. The sequence is that of NADH-ubiquinone oxidoreductase chain 2 from Mungos mungo (Banded mongoose).